A 400-amino-acid chain; its full sequence is Elongation factor Tu (400 aa).

Residues 10 to 209 (KPHINIGTIG…AVDDYIPTPE (200 aa)) form the tr-type G domain. The interval 19-26 (GHVDHGKT) is G1. A GTP-binding site is contributed by 19–26 (GHVDHGKT). Mg(2+) is bound at residue Thr-26. A G2 region spans residues 60–64 (GITIS). Positions 81 to 84 (DCPG) are G3. Residues 81-85 (DCPGH) and 136-139 (NKVD) each bind GTP. Residues 136 to 139 (NKVD) are G4. The interval 174-176 (SAK) is G5.

It belongs to the TRAFAC class translation factor GTPase superfamily. Classic translation factor GTPase family. EF-Tu/EF-1A subfamily. Monomer.

It localises to the cytoplasm. It carries out the reaction GTP + H2O = GDP + phosphate + H(+). Functionally, GTP hydrolase that promotes the GTP-dependent binding of aminoacyl-tRNA to the A-site of ribosomes during protein biosynthesis. The sequence is that of Elongation factor Tu from Herpetosiphon aurantiacus (Herpetosiphon giganteus).